The primary structure comprises 243 residues: Carboxy-S-adenosyl-L-methionine synthase (243 aa).

S-adenosyl-L-methionine is bound by residues Tyr40, 65–67 (GCS), 90–91 (DN), 118–119 (DI), Asn133, and Arg200.

This sequence belongs to the class I-like SAM-binding methyltransferase superfamily. Cx-SAM synthase family. As to quaternary structure, homodimer.

It catalyses the reaction prephenate + S-adenosyl-L-methionine = carboxy-S-adenosyl-L-methionine + 3-phenylpyruvate + H2O. Its function is as follows. Catalyzes the conversion of S-adenosyl-L-methionine (SAM) to carboxy-S-adenosyl-L-methionine (Cx-SAM). In Shewanella sp. (strain MR-7), this protein is Carboxy-S-adenosyl-L-methionine synthase.